Consider the following 85-residue polypeptide: RNA-binding protein Hfq (85 aa).

The region spanning D9–V68 is the Sm domain.

Belongs to the Hfq family. As to quaternary structure, homohexamer.

Functionally, RNA chaperone that binds small regulatory RNA (sRNAs) and mRNAs to facilitate mRNA translational regulation in response to envelope stress, environmental stress and changes in metabolite concentrations. Also binds with high specificity to tRNAs. In Tolumonas auensis (strain DSM 9187 / NBRC 110442 / TA 4), this protein is RNA-binding protein Hfq.